The chain runs to 88 residues: Probable Fe(2+)-trafficking protein (88 aa).

The protein belongs to the Fe(2+)-trafficking protein family.

Could be a mediator in iron transactions between iron acquisition and iron-requiring processes, such as synthesis and/or repair of Fe-S clusters in biosynthetic enzymes. This chain is Probable Fe(2+)-trafficking protein, found in Alkalilimnicola ehrlichii (strain ATCC BAA-1101 / DSM 17681 / MLHE-1).